The primary structure comprises 765 residues: Zinc metalloproteinase nas-37 (765 aa).

Residues 1-22 form the signal peptide; that stretch reads MKSQACLKVCLALIGLVSIVST. A propeptide spanning residues 23 to 114 is cleaved from the precursor; sequence AYIANDVVSD…SESNSPRSRR (92 aa). A Peptidase M12A domain is found at 115 to 308; the sequence is QAHPDPRNFW…AKMINTRYCS (194 aa). The N-linked (GlcNAc...) asparagine glycan is linked to N126. 6 disulfide bridges follow: C156/C307, C177/C196, C311/C331, C333/C342, C350/C374, and C400/C420. H204 serves as a coordination point for Zn(2+). The active site involves E205. 2 residues coordinate Zn(2+): H208 and H214. The 41-residue stretch at 303–343 folds into the EGF-like domain; sequence NTRYCSNVCQRSLPCLNEGYTDPNNCGRCRCPSGYGGTYCE. The CUB domain occupies 350 to 458; sequence CGGSLTASSS…RGFTLKYRAI (109 aa). Positions 513–573 are disordered; it reads KYSSEELYDP…TRPTPTTTVA (61 aa). Low complexity-rich tracts occupy residues 526 to 545 and 562 to 573; these read LSPS…DASP and ALTRPTPTTTVA. Positions 576–627 constitute a TSP type-1 domain; it reads TASWSAWGEWSACSQPCGGCGTKTRVRACYGGNQVCPGSNLDRESCNAHACA. 3 disulfide bridges follow: C588/C621, C592/C626, and C604/C611.

The cofactor is Zn(2+). In terms of tissue distribution, expressed in hypodermal cells. Not expressed in the seam cells in L1 to L3 larvae, but it is present in seam cells of L4 larvae. Also expressed in attachment points of the cuticle at the anterior end of larvae, in the arcade cells in the mouth, the anterior pharynx, the amphid socket cells, and in the rectal epithelial cells at the posterior end of the larvae (at protein level).

It is found in the secreted. Its function is as follows. Metalloprotease. Plays an essential role in molting, a process during larval stages in which a new cuticle is formed and the old cuticle is shed. Required during ecdysis, the opening of the cuticle to allow the worm to escape. The polypeptide is Zinc metalloproteinase nas-37 (nas-37) (Caenorhabditis elegans).